The sequence spans 147 residues: Low molecular weight protein-tyrosine-phosphatase Wzb (147 aa).

The Nucleophile role is filled by Cys-9. Arg-15 is a catalytic residue. Asp-115 acts as the Proton donor in catalysis.

This sequence belongs to the low molecular weight phosphotyrosine protein phosphatase family.

The enzyme catalyses O-phospho-L-tyrosyl-[protein] + H2O = L-tyrosyl-[protein] + phosphate. Its pathway is glycan metabolism; exopolysaccharide biosynthesis. In terms of biological role, dephosphorylates Wzc. Required for the extracellular polysaccharide colanic acid synthesis. Probably involved in the export of colanic acid from the cell to medium. Involved in protection of cells against contact-dependent growth inhibition (CDI). This is Low molecular weight protein-tyrosine-phosphatase Wzb (wzb) from Escherichia coli O157:H7.